The primary structure comprises 284 residues: 4-hydroxybenzoate octaprenyltransferase (284 aa).

Helical transmembrane passes span 19-39 (IGSL…AQGL), 42-62 (LRVL…GCVI), 93-113 (LLLF…MNTL), 114-134 (TIQL…MKRF), 136-156 (HLPQ…AWAA), 158-178 (ANTL…WTIA), 210-230 (IIGL…QGLA), 233-253 (TSYY…QHLI), and 264-284 (AFLN…LSVW).

This sequence belongs to the UbiA prenyltransferase family. The cofactor is Mg(2+).

The protein localises to the cell inner membrane. It carries out the reaction all-trans-octaprenyl diphosphate + 4-hydroxybenzoate = 4-hydroxy-3-(all-trans-octaprenyl)benzoate + diphosphate. It functions in the pathway cofactor biosynthesis; ubiquinone biosynthesis. In terms of biological role, catalyzes the prenylation of para-hydroxybenzoate (PHB) with an all-trans polyprenyl group. Mediates the second step in the final reaction sequence of ubiquinone-8 (UQ-8) biosynthesis, which is the condensation of the polyisoprenoid side chain with PHB, generating the first membrane-bound Q intermediate 3-octaprenyl-4-hydroxybenzoate. The chain is 4-hydroxybenzoate octaprenyltransferase from Vibrio cholerae serotype O1 (strain ATCC 39541 / Classical Ogawa 395 / O395).